The chain runs to 479 residues: Envelope glycoprotein C homolog (479 aa).

A signal peptide spans 1–22 (MASLARAMLALLALYAAAIAAA). At 23 to 451 (PSTTTALDTT…SVSWPVVSSM (429 aa)) the chain is on the virion surface side. The segment at 26-96 (TTALDTTPNG…RVHGDKATAH (71 aa)) is disordered. The N-linked (GlcNAc...) asparagine; by host glycan is linked to Asn40. A compositionally biased stretch (pro residues) spans 48–57 (PSPPPTPAPA). The tract at residues 75–82 (SRRKPPRN) is HDB1. The span at 75-87 (SRRKPPRNNNRTR) shows a compositional bias: basic residues. The N-linked (GlcNAc...) asparagine; by host glycan is linked to Asn84. The interval 95–101 (AHGRKRI) is HDB2. Cys103 and Cys120 are disulfide-bonded. The interval 135–140 (YRRGRF) is HDB3. 6 N-linked (GlcNAc...) asparagine; by host glycosylation sites follow: Asn169, Asn192, Asn220, Asn228, Asn285, and Asn302. 3 disulfide bridges follow: Cys256–Cys326, Cys365–Cys418, and Cys369–Cys392. Residues 452 to 472 (IVVIAGIGILAIVLVIMATCV) form a helical membrane-spanning segment. Residues 473–479 (YYRQAGP) lie on the Cytoplasmic side of the membrane.

It belongs to the herpesviridae glycoprotein C family. As to quaternary structure, interacts with host complement component C3; this interaction inhibits host immune response by disregulating complement cascade.

The protein localises to the virion membrane. Its function is as follows. Essential for the initial attachment to heparan sulfate moieties of the host cell surface proteoglycans. Plays also a role in host immune evasion by inhibiting the host complement cascade activation. The sequence is that of Envelope glycoprotein C homolog (gC) from Suid herpesvirus 1 (strain Indiana-Funkhauser / Becker) (SuHV-1).